The primary structure comprises 535 residues: Sucrose transport protein SUT5 (535 aa).

Topologically, residues 1–53 (MEEGRRGDREAKSAAGWTALSTTKTTLEEKRRLQANGSVGGDAGTSGFRRIVR) are cytoplasmic. A helical transmembrane segment spans residues 54–74 (LFFACMVAGGIQYGWALQLSL). Residues 75–87 (LSPYSQTLGISHS) lie on the Extracellular side of the membrane. The helical transmembrane segment at 88–108 (YVSLTWICGPIAGFVVQPIVG) threads the bilayer. Topologically, residues 109-122 (YYSDRCTMKMGRRR) are cytoplasmic. The chain crosses the membrane as a helical span at residues 123–143 (PFILVGCLIICISVMIIGFSA). Residues 144 to 163 (DIGRHLGDTKEHCSTYTGPR) are Extracellular-facing. Residues 164 to 184 (WSAAMVYIVGFWFLDFANNTV) form a helical membrane-spanning segment. The Cytoplasmic portion of the chain corresponds to 185-203 (QGPARAMMADLSAGHHGPN). A helical transmembrane segment spans residues 204–224 (VGQSIFSLWMAIGSVLGYLSG). Residues 225-249 (ANGKWHEWFPWLKTAACCDACANLK) are Extracellular-facing. Residues 250-270 (GAFFTAVLLIVVSMTVTMYLA) traverse the membrane as a helical segment. Residues 271–302 (DEMPLDKQDVDTSGGGGCAVFVDLFKSLRNLP) are Cytoplasmic-facing. The chain crosses the membrane as a helical span at residues 303–323 (PAMFKVLAVTAVTWLSWFPFI). The Extracellular segment spans residues 324-354 (QYNTDWMGREIYHGEPQGTAAKADVYDAGVR). A helical membrane pass occupies residues 355–375 (EGAMGLLFCSVALGVTSFVIP). Over 376–384 (KLCRRLTSK) the chain is Cytoplasmic. The chain crosses the membrane as a helical span at residues 385–405 (VVWSISNFLVFALMAVMVAVG). The Extracellular segment spans residues 406 to 429 (MVSMRGYRPSLAAGLTGPDPTLKA). The chain crosses the membrane as a helical span at residues 430–450 (VALVVFALIGIPQAVLFSVPW). The Cytoplasmic portion of the chain corresponds to 451–465 (AVASEVTAEEGGGQG). The chain crosses the membrane as a helical span at residues 466–486 (LAIGVLNIAIVVPQLVIALTA). Residues 487 to 498 (GPIDGAFNKGNT) lie on the Extracellular side of the membrane. A helical transmembrane segment spans residues 499–519 (PAFGIGGAFAFICGVLALIWL). The Cytoplasmic segment spans residues 520–535 (PKTRGVSNAAVVAGGH).

The protein belongs to the glycoside-pentoside-hexuronide (GPH) cation symporter transporter (TC 2.A.2.4) family. In terms of assembly, homodimer.

The protein resides in the cell membrane. The protein operates within glycan biosynthesis; sucrose metabolism. Its function is as follows. Responsible for the transport of sucrose into the cell, with the concomitant uptake of protons (symport system). May also transport other glucosides. The protein is Sucrose transport protein SUT5 (SUT5) of Oryza sativa subsp. indica (Rice).